The chain runs to 204 residues: Putative t-SNARE coiled-coil homology domain-containing protein L657 (204 aa).

T-SNARE coiled-coil homology domains lie at 9 to 71 (SDYY…MDHV) and 140 to 202 (DNSR…IKHT). A coiled-coil region spans residues 159–181 (VLEKQANDISNILDEQNNTLEII).

This Acanthamoeba polyphaga (Amoeba) protein is Putative t-SNARE coiled-coil homology domain-containing protein L657.